The following is a 393-amino-acid chain: SH3 domain-binding protein 5-like (393 aa).

Disordered regions lie at residues 1–59 (MAEL…LDPR) and 272–332 (HARR…DTDT). A Phosphothreonine modification is found at threonine 13. Positions 18–28 (LRPEVVEDEVP) are enriched in basic and acidic residues. Phosphoserine occurs at positions 30 and 49. Coiled-coil stretches lie at residues 59-140 (RIQE…YERA) and 169-272 (WQEM…EQIH). The segment covering 304–313 (GDSGIEGAEG) has biased composition (gly residues). Residues 317–332 (EEGSSLGPGPAPDTDT) show a composition bias toward low complexity. Phosphoserine occurs at positions 343, 350, 358, 362, and 378. The interval 364 to 393 (DGQELGTRSGGRRGSDGGVRGGRHQRSVSL) is disordered. A compositionally biased stretch (basic residues) spans 384–393 (GGRHQRSVSL).

Belongs to the SH3BP5 family.

In terms of biological role, functions as a guanine nucleotide exchange factor (GEF) for RAB11A. This is SH3 domain-binding protein 5-like (SH3BP5L) from Pongo abelii (Sumatran orangutan).